Consider the following 33-residue polypeptide: Cytochrome b6-f complex subunit 5 (33 aa).

Residues 5 to 25 (LLFGIILGLISCVLAGLFVSA) form a helical membrane-spanning segment.

This sequence belongs to the PetG family. As to quaternary structure, the 4 large subunits of the cytochrome b6-f complex are cytochrome b6, subunit IV (17 kDa polypeptide, PetD), cytochrome f and the Rieske protein, while the 4 small subunits are PetG, PetL, PetM and PetN. The complex functions as a dimer.

It localises to the plastid. The protein localises to the chloroplast thylakoid membrane. Its function is as follows. Component of the cytochrome b6-f complex, which mediates electron transfer between photosystem II (PSII) and photosystem I (PSI), cyclic electron flow around PSI, and state transitions. PetG is required for either the stability or assembly of the cytochrome b6-f complex. This chain is Cytochrome b6-f complex subunit 5, found in Bigelowiella natans (Pedinomonas minutissima).